We begin with the raw amino-acid sequence, 920 residues long: Neurofibromin-A (920 aa).

A Ras-GAP domain is found at 63–291 (NKTLPLIKDL…EKMSAYFNLI (229 aa)). 2 disordered regions span residues 344–405 (KWLA…TTTA) and 477–508 (LGPS…GASM). The span at 346–369 (LATTPSGNTPSPAISNASSAHNGK) shows a compositional bias: polar residues. Over residues 370 to 405 (SNNTTNNNNNNNNNNNNNNNNNNNNNNNSNKTTTTA) the composition is skewed to low complexity. Polar residues predominate over residues 498-507 (PTTSLQNGAS). Residues 512-673 (FDECTHMLER…TSKDFITKSY (162 aa)) enclose the CRAL-TRIO domain.

Functionally, regulator of the GTPase activity of Ras, mainly RasG and RasB. This is Neurofibromin-A (nfaA) from Dictyostelium discoideum (Social amoeba).